Here is a 526-residue protein sequence, read N- to C-terminus: Tyrosine-protein kinase transforming protein Src (526 aa).

The segment at 1–57 is disordered; the sequence is MGSSKSKPKDPSQRRRSLEPPDSTHHGGFPASQTPNKTAAPDTHRTPSRSFGTVATE. Residue G2 is the site of N-myristoyl glycine; by host attachment. A compositionally biased stretch (basic and acidic residues) spans 7-25; the sequence is KPKDPSQRRRSLEPPDSTH. The 62-residue stretch at 81-142 folds into the SH3 domain; it reads GGVTTFVALY…PSNYVAPSDS (62 aa). One can recognise an SH2 domain in the interval 148–245; that stretch reads WYFGKITRRE…GLCHRLTNVC (98 aa). Residues 267–517 enclose the Protein kinase domain; sequence LRLEVKLGQG…TFEYLQAQLL (251 aa). Residues 273–281 and K295 each bind ATP; that span reads LGQGCFGEV. Residue D386 is the Proton acceptor of the active site. Y416 is subject to Phosphotyrosine; by autocatalysis.

It belongs to the protein kinase superfamily. Tyr protein kinase family. SRC subfamily. Homodimer. The phosphorylated form is termed pp60v-src.

The catalysed reaction is L-tyrosyl-[protein] + ATP = O-phospho-L-tyrosyl-[protein] + ADP + H(+). This phosphoprotein, required for both the initiation and the maintenance of neoplastic transformation, is a protein kinase that catalyzes the phosphorylation of tyrosine residues in vitro. Causes mitotic slippage in addition to cytokinesis failure in the host cell. Phosphorylates and attenuates the activity of host CDK1, possibly causing the mitotic slippage. The sequence is that of Tyrosine-protein kinase transforming protein Src (V-SRC) from Rous sarcoma virus subgroup A (strain Schmidt-Ruppin) (RSV-SR-A).